Consider the following 460-residue polypeptide: Muscarinic acetylcholine receptor M1 (460 aa).

The Extracellular segment spans residues 1-22; sequence MNTSAPPAVSPNITVLAPGKGP. N-linked (GlcNAc...) asparagine glycans are attached at residues N2 and N12. The helical transmembrane segment at 23–48 threads the bilayer; sequence WQVAFIGITTGLLSLATVTGNLLVLI. The Cytoplasmic segment spans residues 49–62; that stretch reads SFKVNTELKTVNNY. Residues 63 to 84 traverse the membrane as a helical segment; sequence FLLSLACADLIIGTFSMNLYTT. At 85–95 the chain is on the extracellular side; it reads YLLMGHWALGT. A helical transmembrane segment spans residues 96 to 121; sequence LACDLWLALDYVASNASVMNLLLISF. Cysteines 98 and 178 form a disulfide. Over 122-142 the chain is Cytoplasmic; it reads DRYFSVTRPLSYRAKRTPRRA. Residues 143–164 form a helical membrane-spanning segment; sequence ALMIGLAWLVSFVLWAPAILFW. Over 165-185 the chain is Extracellular; that stretch reads QYLVGERTVLAGQCYIQFLSQ. A helical membrane pass occupies residues 186–209; sequence PIITFGTAMAAFYLPVTVMCTLYW. The Cytoplasmic segment spans residues 210–366; sequence RIYRETENRA…LVKEKKAART (157 aa). Disordered regions lie at residues 225–259, 273–297, and 310–351; these read LQGS…PGRC, SWKE…EEPG, and EAQA…QLAK. T230 is subject to Phosphothreonine. Residues 238-247 show a composition bias toward low complexity; it reads SSSSERSQPG. Basic residues predominate over residues 328 to 343; it reads RPTKKGRDRAGKGQKP. A helical transmembrane segment spans residues 367-390; it reads LSAILLAFILTWTPYNIMVLVSTF. Residues 391 to 401 are Extracellular-facing; it reads CKDCVPETLWE. The chain crosses the membrane as a helical span at residues 402–420; the sequence is LGYWLCYVNSTINPMCYAL. At 421-460 the chain is on the cytoplasmic side; the sequence is CNKAFRDTFRLLLLCRWDKRRWRKIPKRPGSVHRTPSRQC. T428 is subject to Phosphothreonine. S451 bears the Phosphoserine mark. The residue at position 455 (T455) is a Phosphothreonine. Position 457 is a phosphoserine (S457).

This sequence belongs to the G-protein coupled receptor 1 family. Muscarinic acetylcholine receptor subfamily. CHRM1 sub-subfamily. Interacts with GPRASP2. Interacts with TMEM147.

The protein localises to the cell membrane. It is found in the postsynaptic cell membrane. The muscarinic acetylcholine receptor mediates various cellular responses, including inhibition of adenylate cyclase, breakdown of phosphoinositides and modulation of potassium channels through the action of G proteins. Primary transducing effect is Pi turnover. The protein is Muscarinic acetylcholine receptor M1 (CHRM1) of Macaca mulatta (Rhesus macaque).